The following is a 62-amino-acid chain: UPF0434 protein BP2767 (62 aa).

Belongs to the UPF0434 family.

The chain is UPF0434 protein BP2767 from Bordetella pertussis (strain Tohama I / ATCC BAA-589 / NCTC 13251).